Here is a 399-residue protein sequence, read N- to C-terminus: Arylacetamide deacetylase (399 aa).

The Cytoplasmic portion of the chain corresponds to 1 to 4 (MRKK). Residues 5 to 25 (YFGFLILGVLLAGYIYVPLPD) form a helical; Signal-anchor for type II membrane protein membrane-spanning segment. Over 26–399 (NVEEPWKIML…QYINWLHENL (374 aa)) the chain is Lumenal. The Involved in the stabilization of the negatively charged intermediate by the formation of the oxyanion hole signature appears at 111–113 (HGG). A disulfide bridge connects residues Cys-116 and Cys-340. Ser-189 is a catalytic residue. N-linked (GlcNAc...) asparagine glycosylation is present at Asn-282. Active-site residues include Asp-343 and His-373.

The protein belongs to the 'GDXG' lipolytic enzyme family.

The protein localises to the endoplasmic reticulum membrane. It is found in the microsome membrane. It carries out the reaction a triacylglycerol + H2O = a diacylglycerol + a fatty acid + H(+). Its function is as follows. Displays cellular triglyceride lipase activity in liver, increases the levels of intracellular fatty acids derived from the hydrolysis of newly formed triglyceride stores and plays a role in very low-density lipoprotein assembly. Displays serine esterase activity in liver. Deacetylates a variety of arylacetamide substrates, including xenobiotic compounds and procarcinogens, converting them to the primary arylamide compounds and increasing their toxicity. This is Arylacetamide deacetylase (AADAC) from Bos taurus (Bovine).